We begin with the raw amino-acid sequence, 460 residues long: DNA repair protein RAD57 (460 aa).

An ATP-binding site is contributed by 125 to 132 (GESSTGKS).

This sequence belongs to the RecA family.

It is found in the nucleus. Its function is as follows. Participates in the repair of X-ray-induced damage to DNA and in meiosis. It may act in part by stabilizing a repair complex of other RAD genes. This Saccharomyces cerevisiae (strain ATCC 204508 / S288c) (Baker's yeast) protein is DNA repair protein RAD57 (RAD57).